Consider the following 608-residue polypeptide: Glutamine--fructose-6-phosphate aminotransferase [isomerizing] (608 aa).

The Nucleophile; for GATase activity role is filled by cysteine 2. The Glutamine amidotransferase type-2 domain maps to 2 to 217; it reads CGIVGYIGKK…DNEFVLMTKD (216 aa). SIS domains lie at 284-424 and 453-598; these read ISKE…EKGT and IMKK…VDKP. Lysine 603 functions as the For Fru-6P isomerization activity in the catalytic mechanism.

Homodimer.

The protein localises to the cytoplasm. The catalysed reaction is D-fructose 6-phosphate + L-glutamine = D-glucosamine 6-phosphate + L-glutamate. Its function is as follows. Catalyzes the first step in hexosamine metabolism, converting fructose-6P into glucosamine-6P using glutamine as a nitrogen source. This is Glutamine--fructose-6-phosphate aminotransferase [isomerizing] from Clostridium tetani (strain Massachusetts / E88).